The chain runs to 365 residues: RISC-loading complex subunit TARBP2 (365 aa).

Sufficient for interaction with PRKRA regions lie at residues 22-105 (MLAA…EPAL), 151-233 (SPQQ…DARD), and 286-365 (LGAL…AGSK). The 68-residue stretch at 30–97 (TPISLLQEYG…AEVALKHLKG (68 aa)) folds into the DRBM 1 domain. The residue at position 151 (S151) is a Phosphoserine. 2 consecutive DRBM domains span residues 158-226 (NPVG…RVHT) and 292-360 (ACCS…YLRI). A sufficient for interaction with DICER1 region spans residues 227 to 365 (VPLDARDGNE…QYLRIMAGSK (139 aa)).

It belongs to the TARBP2 family. Self-associates. Component of the RISC loading complex (RLC), or micro-RNA (miRNA) loading complex (miRLC), which is composed of DICER1, AGO2 and TARBP2. Note that the trimeric RLC/miRLC is also referred to as RISC. Interacts with EIF2AK2/PKR and inhibits its protein kinase activity. Interacts with DHX9. Interacts with DICER1 and PRKRA. Interacts with DICER1, AGO2, MOV10, EIF6 and RPL7A (60S ribosome subunit); they form a large RNA-induced silencing complex (RISC). Interacts with IRF7; this interaction prevents IRF7 phosphorylation and activation.

It localises to the cytoplasm. The protein resides in the perinuclear region. It is found in the nucleus. Required for formation of the RNA induced silencing complex (RISC). Component of the RISC loading complex (RLC), also known as the micro-RNA (miRNA) loading complex (miRLC), which is composed of DICER1, AGO2 and TARBP2. Within the RLC/miRLC, DICER1 and TARBP2 are required to process precursor miRNAs (pre-miRNAs) to mature miRNAs and then load them onto AGO2. AGO2 bound to the mature miRNA constitutes the minimal RISC and may subsequently dissociate from DICER1 and TARBP2. May also play a role in the production of short interfering RNAs (siRNAs) from double-stranded RNA (dsRNA) by DICER1. Binds in vitro to the PRM1 3'-UTR. Seems to act as a repressor of translation. For some pre-miRNA substrates, may also alter the choice of cleavage site by DICER1. Negatively regulates IRF7-mediated IFN-beta signaling triggered by viral infection by inhibiting the phosphorylation of IRF7 and promoting its 'Lys'-48-linked ubiquitination and degradation. The protein is RISC-loading complex subunit TARBP2 (Tarbp2) of Mus musculus (Mouse).